The following is a 227-amino-acid chain: NAD(P)H-quinone oxidoreductase subunit K, chloroplastic (227 aa).

Positions 43, 44, 108, and 139 each coordinate [4Fe-4S] cluster.

It belongs to the complex I 20 kDa subunit family. NDH is composed of at least 16 different subunits, 5 of which are encoded in the nucleus. [4Fe-4S] cluster is required as a cofactor.

The protein localises to the plastid. Its subcellular location is the chloroplast thylakoid membrane. The enzyme catalyses a plastoquinone + NADH + (n+1) H(+)(in) = a plastoquinol + NAD(+) + n H(+)(out). It carries out the reaction a plastoquinone + NADPH + (n+1) H(+)(in) = a plastoquinol + NADP(+) + n H(+)(out). NDH shuttles electrons from NAD(P)H:plastoquinone, via FMN and iron-sulfur (Fe-S) centers, to quinones in the photosynthetic chain and possibly in a chloroplast respiratory chain. The immediate electron acceptor for the enzyme in this species is believed to be plastoquinone. Couples the redox reaction to proton translocation, and thus conserves the redox energy in a proton gradient. This is NAD(P)H-quinone oxidoreductase subunit K, chloroplastic from Citrus sinensis (Sweet orange).